The sequence spans 360 residues: Phospho-N-acetylmuramoyl-pentapeptide-transferase (360 aa).

The next 10 helical transmembrane spans lie at 27 to 47, 74 to 94, 99 to 119, 135 to 155, 165 to 185, 199 to 219, 236 to 256, 263 to 283, 288 to 308, and 337 to 357; these read GATA…IAAL, TMGG…WANL, VWVV…DDYL, LLLE…LGTP, INGF…FVIV, GLAI…AYLA, AGEL…FLWF, IFMG…VAVA, IVLA…IVQV, and QVVV…LSTL.

It belongs to the glycosyltransferase 4 family. MraY subfamily. Requires Mg(2+) as cofactor.

It is found in the cell inner membrane. The catalysed reaction is UDP-N-acetyl-alpha-D-muramoyl-L-alanyl-gamma-D-glutamyl-meso-2,6-diaminopimeloyl-D-alanyl-D-alanine + di-trans,octa-cis-undecaprenyl phosphate = di-trans,octa-cis-undecaprenyl diphospho-N-acetyl-alpha-D-muramoyl-L-alanyl-D-glutamyl-meso-2,6-diaminopimeloyl-D-alanyl-D-alanine + UMP. The protein operates within cell wall biogenesis; peptidoglycan biosynthesis. Catalyzes the initial step of the lipid cycle reactions in the biosynthesis of the cell wall peptidoglycan: transfers peptidoglycan precursor phospho-MurNAc-pentapeptide from UDP-MurNAc-pentapeptide onto the lipid carrier undecaprenyl phosphate, yielding undecaprenyl-pyrophosphoryl-MurNAc-pentapeptide, known as lipid I. The sequence is that of Phospho-N-acetylmuramoyl-pentapeptide-transferase from Methylocella silvestris (strain DSM 15510 / CIP 108128 / LMG 27833 / NCIMB 13906 / BL2).